A 109-amino-acid polypeptide reads, in one-letter code: UPF0102 protein Suden_1901 (109 aa).

It belongs to the UPF0102 family.

This chain is UPF0102 protein Suden_1901, found in Sulfurimonas denitrificans (strain ATCC 33889 / DSM 1251) (Thiomicrospira denitrificans (strain ATCC 33889 / DSM 1251)).